The following is a 261-amino-acid chain: Putative phosphite transport system permease protein HtxE (261 aa).

The 207-residue stretch at 47–253 folds into the ABC transmembrane type-1 domain; the sequence is EATTETVEVL…VFVFVLDQLQ (207 aa). A run of 3 helical transmembrane segments spans residues 122-142, 203-220, and 229-249; these read LIVA…GVLA, RNLR…GGIG, and MFQY…VFVL.

It belongs to the binding-protein-dependent transport system permease family.

Its subcellular location is the cell inner membrane. Probably forms part of a binding-protein-dependent hypophosphite transporter. In Stutzerimonas stutzeri (Pseudomonas stutzeri), this protein is Putative phosphite transport system permease protein HtxE (htxE).